Consider the following 388-residue polypeptide: Succinate--CoA ligase [ADP-forming] subunit beta (388 aa).

Residues 9–244 form the ATP-grasp domain; that stretch reads KQLFARYGLP…PSQEDSREAH (236 aa). Residues lysine 46, 53–55, glutamate 99, threonine 102, and glutamate 107 contribute to the ATP site; that span reads GRG. Mg(2+) is bound by residues asparagine 199 and aspartate 213. Substrate-binding positions include asparagine 264 and 321-323; that span reads GIV.

This sequence belongs to the succinate/malate CoA ligase beta subunit family. Heterotetramer of two alpha and two beta subunits. The cofactor is Mg(2+).

The catalysed reaction is succinate + ATP + CoA = succinyl-CoA + ADP + phosphate. It catalyses the reaction GTP + succinate + CoA = succinyl-CoA + GDP + phosphate. Its pathway is carbohydrate metabolism; tricarboxylic acid cycle; succinate from succinyl-CoA (ligase route): step 1/1. Its function is as follows. Succinyl-CoA synthetase functions in the citric acid cycle (TCA), coupling the hydrolysis of succinyl-CoA to the synthesis of either ATP or GTP and thus represents the only step of substrate-level phosphorylation in the TCA. The beta subunit provides nucleotide specificity of the enzyme and binds the substrate succinate, while the binding sites for coenzyme A and phosphate are found in the alpha subunit. This is Succinate--CoA ligase [ADP-forming] subunit beta from Pectobacterium carotovorum subsp. carotovorum (strain PC1).